The chain runs to 291 residues: U3 small nucleolar ribonucleoprotein protein IMP4 (291 aa).

Residues 83-264 form the Brix domain; sequence PKVMITTSRD…LYMIRLGTLE (182 aa).

As to quaternary structure, part of the small subunit (SSU) processome, composed of more than 70 proteins and the RNA chaperone small nucleolar RNA (snoRNA) U3. Component of a heterotrimeric complex containing IMP3, IMP4 and MPHOSPH10. Interacts with MPHOSPH10.

Its subcellular location is the nucleus. It is found in the nucleolus. In terms of biological role, component of the 60-80S U3 small nucleolar ribonucleoprotein (U3 snoRNP). Required for the early cleavages during pre-18S ribosomal RNA processing. Part of the small subunit (SSU) processome, first precursor of the small eukaryotic ribosomal subunit. During the assembly of the SSU processome in the nucleolus, many ribosome biogenesis factors, an RNA chaperone and ribosomal proteins associate with the nascent pre-rRNA and work in concert to generate RNA folding, modifications, rearrangements and cleavage as well as targeted degradation of pre-ribosomal RNA by the RNA exosome. The protein is U3 small nucleolar ribonucleoprotein protein IMP4 (IMP4) of Pongo abelii (Sumatran orangutan).